The following is a 69-amino-acid chain: DWECLPLHSSCDNDCVCCKNHHCHCPYSNVSKLEKWLPEWAKIPDALKRCSCQRNDKDGKINTCDKYKN.

The region spanning 1-68 (DWECLPLHSS…GKINTCDKYK (68 aa)) is the Oxytoxin-type inhibitor cystine knot (ICK) domain. 5 cysteine pairs are disulfide-bonded: Cys4/Cys18, Cys11/Cys23, Cys15/Cys64, Cys17/Cys52, and Cys25/Cys50. Asparagine amide is present on Asn69.

Belongs to the spiderine family. Spiderine subfamily. Expressed by the venom gland.

It is found in the secreted. Weak blocker of vertebrate P/Q-, N- and L-type voltage-gated calcium channels (Cav1 and Cav2). Is both paralytic and lethal when injected into lepidopteran larvae. Is not toxic to mice. In Oxyopes lineatus (Lynx spider), this protein is Omega-oxotoxin-Ol1a.